A 143-amino-acid chain; its full sequence is Small ribosomal subunit protein eS12 (143 aa).

Belongs to the eukaryotic ribosomal protein eS12 family. In terms of assembly, component of the small ribosomal subunit. Mature ribosomes consist of a small (40S) and a large (60S) subunit. The 40S subunit contains about 32 different proteins and 1 molecule of RNA (18S). The 60S subunit contains 45 different proteins and 3 molecules of RNA (25S, 5.8S and 5S).

The protein resides in the cytoplasm. Functionally, component of the ribosome, a large ribonucleoprotein complex responsible for the synthesis of proteins in the cell. The small ribosomal subunit (SSU) binds messenger RNAs (mRNAs) and translates the encoded message by selecting cognate aminoacyl-transfer RNA (tRNA) molecules. The large subunit (LSU) contains the ribosomal catalytic site termed the peptidyl transferase center (PTC), which catalyzes the formation of peptide bonds, thereby polymerizing the amino acids delivered by tRNAs into a polypeptide chain. The nascent polypeptides leave the ribosome through a tunnel in the LSU and interact with protein factors that function in enzymatic processing, targeting, and the membrane insertion of nascent chains at the exit of the ribosomal tunnel. This chain is Small ribosomal subunit protein eS12 (RPS12), found in Candida albicans (strain SC5314 / ATCC MYA-2876) (Yeast).